Reading from the N-terminus, the 453-residue chain is Choline kinase alpha (453 aa).

Residues 22-81 (CGGNAAPTPGVGQQRDAAGELESKQLGGRTQPLALPPPPPPPLPLPPPPSPPLADEQPEP) form a disordered region. Residues 55 to 73 (ALPPPPPPPLPLPPPPSPP) are compositionally biased toward pro residues. Position 71 is a phosphoserine (S71). Residues 113–119 (RGGLSNM), R142, and 203–209 (QFIPSRR) each bind ATP. 115 to 117 (GLS) contacts phosphocholine. An N6-acetyllysine modification is found at K243. Phosphoserine is present on S275. Residues Q304 and D326 each coordinate ATP.

The protein belongs to the choline/ethanolamine kinase family. Homodimer. Heterodimer with CHKB. As to quaternary structure, monomer; acetylation by KAT5 promotes dissociation of the homodimer and monomerization. Post-translationally, phosphorylated at Ser-275 by AMPK in response to glucose deprivation, leading to localization to lipid droplets. Acetylated by KAT5 at Lys-243 following phosphorylation by AMPK, leading to monomerization and conversion into a tyrosine-protein kinase. In terms of tissue distribution, expressed ubiquitously with the highest level in testis.

It localises to the cytoplasm. The protein localises to the cytosol. Its subcellular location is the lipid droplet. The catalysed reaction is choline + ATP = phosphocholine + ADP + H(+). The enzyme catalyses ethanolamine + ATP = phosphoethanolamine + ADP + H(+). It catalyses the reaction L-tyrosyl-[protein] + ATP = O-phospho-L-tyrosyl-[protein] + ADP + H(+). It functions in the pathway phospholipid metabolism; phosphatidylcholine biosynthesis; phosphocholine from choline: step 1/1. It participates in phospholipid metabolism; phosphatidylethanolamine biosynthesis; phosphatidylethanolamine from ethanolamine: step 1/3. Its function is as follows. Plays a key role in phospholipid biosynthesis by catalyzing the phosphorylation of free choline to phosphocholine, the first step in phosphatidylcholine biosynthesis. Also phosphorylates ethanolamine, thereby contributing to phosphatidylethanolamine biosynthesis. Has higher activity with choline. Functionally, this isoform plays a key role in lipolysis of lipid droplets following glucose deprivation. In response to glucose deprivation, phosphorylated by AMPK, promoting localization to lipid droplets. Phosphorylation is followed by acetylation by KAT5, leading to dissociation of the homodimer into a monomer. Monomeric CHKA isoform 1 is converted into a tyrosine-protein kinase, which phosphorylates lipid droplet structural proteins PLIN2 and PLIN3, leading to lipolysis of lipid droplets. The protein is Choline kinase alpha (Chka) of Mus musculus (Mouse).